Reading from the N-terminus, the 211-residue chain is Dual specificity protein phosphatase 26 (211 aa).

Residues 60-207 (NHADEVWPGL…LLALDRRLRQ (148 aa)) enclose the Tyrosine-protein phosphatase domain. The Phosphocysteine intermediate role is filled by cysteine 152.

It belongs to the protein-tyrosine phosphatase family. Non-receptor class dual specificity subfamily. Interacts with HSF4.

It localises to the cytoplasm. The protein resides in the nucleus. Its subcellular location is the golgi apparatus. It carries out the reaction O-phospho-L-tyrosyl-[protein] + H2O = L-tyrosyl-[protein] + phosphate. It catalyses the reaction O-phospho-L-seryl-[protein] + H2O = L-seryl-[protein] + phosphate. The enzyme catalyses O-phospho-L-threonyl-[protein] + H2O = L-threonyl-[protein] + phosphate. Functionally, inactivates MAPK1 and MAPK3 which leads to dephosphorylation of heat shock factor protein 4 and a reduction in its DNA-binding activity. In Bos taurus (Bovine), this protein is Dual specificity protein phosphatase 26 (DUSP26).